The primary structure comprises 283 residues: 4-diphosphocytidyl-2-C-methyl-D-erythritol kinase (283 aa).

K12 is an active-site residue. Residue 99–109 coordinates ATP; the sequence is PLAAGIGGGSA. D141 is an active-site residue.

It belongs to the GHMP kinase family. IspE subfamily.

The catalysed reaction is 4-CDP-2-C-methyl-D-erythritol + ATP = 4-CDP-2-C-methyl-D-erythritol 2-phosphate + ADP + H(+). Its pathway is isoprenoid biosynthesis; isopentenyl diphosphate biosynthesis via DXP pathway; isopentenyl diphosphate from 1-deoxy-D-xylulose 5-phosphate: step 3/6. Functionally, catalyzes the phosphorylation of the position 2 hydroxy group of 4-diphosphocytidyl-2C-methyl-D-erythritol. The protein is 4-diphosphocytidyl-2-C-methyl-D-erythritol kinase of Sphingopyxis alaskensis (strain DSM 13593 / LMG 18877 / RB2256) (Sphingomonas alaskensis).